The sequence spans 369 residues: Type 2 DNA topoisomerase 6 subunit A (369 aa).

The Topo IIA-type catalytic domain maps to 10–146; it reads KPREIAKQKI…LGFIPEEDGS (137 aa). Catalysis depends on Tyr-103, which acts as the O-(5'-phospho-DNA)-tyrosine intermediate. Mg(2+) contacts are provided by Glu-197 and Asp-249.

The protein belongs to the TOP6A family. Homodimer. Heterotetramer of two Top6A and two Top6B chains. Mg(2+) serves as cofactor.

The enzyme catalyses ATP-dependent breakage, passage and rejoining of double-stranded DNA.. In terms of biological role, relaxes both positive and negative superturns and exhibits a strong decatenase activity. This Methanocaldococcus jannaschii (strain ATCC 43067 / DSM 2661 / JAL-1 / JCM 10045 / NBRC 100440) (Methanococcus jannaschii) protein is Type 2 DNA topoisomerase 6 subunit A.